A 62-amino-acid polypeptide reads, in one-letter code: Large ribosomal subunit protein uL30 (62 aa).

The protein belongs to the universal ribosomal protein uL30 family. In terms of assembly, part of the 50S ribosomal subunit.

The sequence is that of Large ribosomal subunit protein uL30 from Alkalilimnicola ehrlichii (strain ATCC BAA-1101 / DSM 17681 / MLHE-1).